Consider the following 189-residue polypeptide: Probable nicotinate-nucleotide adenylyltransferase (189 aa).

The protein belongs to the NadD family.

The enzyme catalyses nicotinate beta-D-ribonucleotide + ATP + H(+) = deamido-NAD(+) + diphosphate. The protein operates within cofactor biosynthesis; NAD(+) biosynthesis; deamido-NAD(+) from nicotinate D-ribonucleotide: step 1/1. In terms of biological role, catalyzes the reversible adenylation of nicotinate mononucleotide (NaMN) to nicotinic acid adenine dinucleotide (NaAD). This Bacillus cereus (strain AH187) protein is Probable nicotinate-nucleotide adenylyltransferase.